Consider the following 356-residue polypeptide: Methionine import ATP-binding protein MetN (356 aa).

The ABC transporter domain occupies 7–250 (IKLDNIDVTF…PRESLTQDFI (244 aa)). An ATP-binding site is contributed by 43–50 (GYSGAGKS).

It belongs to the ABC transporter superfamily. Methionine importer (TC 3.A.1.24) family. As to quaternary structure, the complex is composed of two ATP-binding proteins (MetN), two transmembrane proteins (MetI) and a solute-binding protein (MetQ).

Its subcellular location is the cell membrane. The catalysed reaction is L-methionine(out) + ATP + H2O = L-methionine(in) + ADP + phosphate + H(+). It carries out the reaction D-methionine(out) + ATP + H2O = D-methionine(in) + ADP + phosphate + H(+). Its function is as follows. Part of the ABC transporter complex MetNIQ involved in methionine import. Responsible for energy coupling to the transport system. The protein is Methionine import ATP-binding protein MetN of Streptococcus agalactiae serotype III (strain NEM316).